The sequence spans 467 residues: 3-isopropylmalate dehydratase large subunit (467 aa).

Cysteine 349, cysteine 408, and cysteine 411 together coordinate [4Fe-4S] cluster.

This sequence belongs to the aconitase/IPM isomerase family. LeuC type 1 subfamily. Heterodimer of LeuC and LeuD. The cofactor is [4Fe-4S] cluster.

It carries out the reaction (2R,3S)-3-isopropylmalate = (2S)-2-isopropylmalate. The protein operates within amino-acid biosynthesis; L-leucine biosynthesis; L-leucine from 3-methyl-2-oxobutanoate: step 2/4. Its function is as follows. Catalyzes the isomerization between 2-isopropylmalate and 3-isopropylmalate, via the formation of 2-isopropylmaleate. The protein is 3-isopropylmalate dehydratase large subunit of Dinoroseobacter shibae (strain DSM 16493 / NCIMB 14021 / DFL 12).